The sequence spans 702 residues: MGRRKIEIKAIKDDRNRSVTFLKRKGGLFKKAHELSVLCSVDVAVFIFGTNKKLYEYSSGDMRELITRYTYHGGATEHKGPSDFNGGDDDDEEEGDGTPPLDQPMDAHMMPPHFQGQGPFPPHVMRHYTPSASPPIPNGVPFPPHGHGVPRGHTPQPQMLSRPGSRNDARRMGQPMGPQGSPQVNGFGFGQQQSMYGPPNTTMPPHMPPQMAPGPPFPYPQHPQHPPHPPHPPHPPHPQQPHQPQMQQQFIEDGRRATMPANFAPHPPPPHGPMGMQRHSVSPPQQHPHHVPQLPPQQPQQHPHSSPPQPQHHQMQSPPQPMVKFESPQQIEPPQHQHQQQPEPQEPRPEQQQQQQQSQQSQQPQEPQSEPARSLPPPPPPLEVKTELAPPAQPGRIPQPSLLDTAVKKLPRQKQHSIFTPIDENRSILSQHLAAFHAEPSKNKSSPPAHHRSSSVDESTSNASEASRGKDKDIASSPPLLKRADPRASISSVSSAPESAPAPPSRSNSLRAGPPRPRLKVQIPDEQSEDGSGSATAESASSAQGGASTDATSQSTRQNDSHSSTNMVLPPPSPSASALLSAGATGPPNPFAPKRPPQHPAPGLNIDTPVSALPSRFLNNEFLPSPSSFYPDWNFRGGDNNTLPSPLNFATPVVGTGPSFLRDENPGASLKRKSPDNLSIHGPISDNPLEAGNEPKRVKVDS.

Positions 1 to 61 (MGRRKIEIKA…KKLYEYSSGD (61 aa)) constitute an MADS-box domain. 2 disordered regions span residues 73–608 (GGAT…NIDT) and 658–702 (PSFL…KVDS). A compositionally biased stretch (acidic residues) spans 86–96 (GGDDDDEEEGD). Residues 132-144 (ASPPIPNGVPFPP) show a composition bias toward pro residues. Residues 145–155 (HGHGVPRGHTP) show a composition bias toward low complexity. Residues 180-195 (GSPQVNGFGFGQQQSM) show a composition bias toward polar residues. Residues 201–241 (TTMPPHMPPQMAPGPPFPYPQHPQHPPHPPHPPHPPHPQQP) are compositionally biased toward pro residues. 3 stretches are compositionally biased toward low complexity: residues 273 to 284 (PMGMQRHSVSPP), 326 to 343 (ESPQ…QQPE), and 350 to 371 (EQQQ…QSEP). Over residues 456 to 465 (VDESTSNASE) the composition is skewed to polar residues. 2 stretches are compositionally biased toward low complexity: residues 487–512 (RASI…SLRA) and 530–553 (DGSG…DATS). Over residues 554–567 (QSTRQNDSHSSTNM) the composition is skewed to polar residues. Positions 587 to 600 (PPNPFAPKRPPQHP) are enriched in pro residues. The span at 693 to 702 (NEPKRVKVDS) shows a compositional bias: basic and acidic residues.

Belongs to the MEF2 family. Interacts with MAPK MPS1.

It localises to the nucleus. Transcription factor acting downstream of the MPS1 MAP kinase (MAPK) cascade during conidiation and plant infection. Required for overcoming plant defense responses and the differentiation of secondary infectious hyphae in live plant cells. In Pyricularia oryzae (Rice blast fungus), this protein is MADS-box MEF2 type transcription factor MIG1.